The following is a 259-amino-acid chain: MMQKQNMIVVNQKEIAKNIYELVLQGTLVQQMNEPGQFVHIKVAEGIAPLLRRPISICNVDQEKNEFTMLYRAEGQGTKTLATRKQGEMVDVLGPLGHGFPLEEAEAGQTALLVGGGIGVPPLYELSQRLVAKGVRVIHILGFQTKDVVFYEEKFAELGDTYVATVDGTHGTKGFVTDVIDNYGIDFDILYSCGPLAMLRALEGRYKEKKAYISLEERMGCGIGACFACVCHLQEDPSGHSYKKVCSDGPVFPIGEVVL.

Positions 2–102 (MQKQNMIVVN…LGPLGHGFPL (101 aa)) constitute an FAD-binding FR-type domain. FAD is bound by residues 53–56 (RPIS), 70–72 (LYR), and 77–78 (GT). The [2Fe-2S] cluster site is built by C221, C226, C229, and C246.

It belongs to the PyrK family. In terms of assembly, heterotetramer of 2 PyrK and 2 PyrD type B subunits. [2Fe-2S] cluster serves as cofactor. Requires FAD as cofactor.

The protein operates within pyrimidine metabolism; UMP biosynthesis via de novo pathway; orotate from (S)-dihydroorotate (NAD(+) route): step 1/1. Responsible for channeling the electrons from the oxidation of dihydroorotate from the FMN redox center in the PyrD type B subunit to the ultimate electron acceptor NAD(+). In Bacillus cereus (strain B4264), this protein is Dihydroorotate dehydrogenase B (NAD(+)), electron transfer subunit.